Here is a 204-residue protein sequence, read N- to C-terminus: Holliday junction branch migration complex subunit RuvA (204 aa).

The segment at 1-64 (MIGRLCGTAE…EDAITLFGFI (64 aa)) is domain I. Positions 65–143 (DAAERDWFRL…AMPTGSAFIP (79 aa)) are domain II. Positions 144–154 (TGTAPPVAPPQ) are flexible linker. The interval 154 to 204 (QGKLADALSALVNLGYRRAEAEAALSAVQAEAGEDAALDELIRGGLRRLAR) is domain III.

It belongs to the RuvA family. Homotetramer. Forms an RuvA(8)-RuvB(12)-Holliday junction (HJ) complex. HJ DNA is sandwiched between 2 RuvA tetramers; dsDNA enters through RuvA and exits via RuvB. An RuvB hexamer assembles on each DNA strand where it exits the tetramer. Each RuvB hexamer is contacted by two RuvA subunits (via domain III) on 2 adjacent RuvB subunits; this complex drives branch migration. In the full resolvosome a probable DNA-RuvA(4)-RuvB(12)-RuvC(2) complex forms which resolves the HJ.

Its subcellular location is the cytoplasm. The RuvA-RuvB-RuvC complex processes Holliday junction (HJ) DNA during genetic recombination and DNA repair, while the RuvA-RuvB complex plays an important role in the rescue of blocked DNA replication forks via replication fork reversal (RFR). RuvA specifically binds to HJ cruciform DNA, conferring on it an open structure. The RuvB hexamer acts as an ATP-dependent pump, pulling dsDNA into and through the RuvAB complex. HJ branch migration allows RuvC to scan DNA until it finds its consensus sequence, where it cleaves and resolves the cruciform DNA. This Acidiphilium cryptum (strain JF-5) protein is Holliday junction branch migration complex subunit RuvA.